We begin with the raw amino-acid sequence, 460 residues long: G2/mitotic-specific cyclin-4 (460 aa).

It belongs to the cyclin family. Cyclin AB subfamily.

Essential for the control of the cell cycle at the G2/M (mitosis) transition. Interacts with the CDC2 protein kinase to form MPF. G2/M cyclins accumulate steadily during G2 and are abruptly destroyed at mitosis. This is G2/mitotic-specific cyclin-4 (CLB4) from Saccharomyces cerevisiae (strain ATCC 204508 / S288c) (Baker's yeast).